The following is a 310-amino-acid chain: Methionyl-tRNA formyltransferase (310 aa).

A (6S)-5,6,7,8-tetrahydrofolate-binding site is contributed by 111–114; the sequence is SLLP.

The protein belongs to the Fmt family.

The enzyme catalyses L-methionyl-tRNA(fMet) + (6R)-10-formyltetrahydrofolate = N-formyl-L-methionyl-tRNA(fMet) + (6S)-5,6,7,8-tetrahydrofolate + H(+). Functionally, attaches a formyl group to the free amino group of methionyl-tRNA(fMet). The formyl group appears to play a dual role in the initiator identity of N-formylmethionyl-tRNA by promoting its recognition by IF2 and preventing the misappropriation of this tRNA by the elongation apparatus. This is Methionyl-tRNA formyltransferase from Rhodopseudomonas palustris (strain TIE-1).